A 335-amino-acid polypeptide reads, in one-letter code: MNFKKLPKIELHCHLDGSLRVDTILDIAKKDNIHLPSYNKKELINYVSIMDDCNSLDEYLNKFFIPNKVMQTKENLKRIAFELLEDVAADNVKYIEVRFAPLLHVEKGLNIEEIIESVLEGIKEAEKLYDIKGNLILGCMRNMDIPSAFEVVKKGAKFIGKGVVAIDLCAGEEPHFPGKYIEVLKLAKECGYRITIHAGEAGVGENVLEAINLLNAERIGHGIYIKDCAEAYKLVKEKNIPLEVCPTSNLHTKAFESYETHPFMDFLKDGIKVTINTDNMTVSNTTITKELEMLNKFCGLSIGDYKILYLNAVEASFASSETKEVLKSYVKEITA.

Zn(2+) is bound by residues His12 and His14. Substrate is bound by residues His14 and Asp16. His197 provides a ligand contact to Zn(2+). The active-site Proton donor is the Glu200. Residue Asp278 participates in Zn(2+) binding.

Belongs to the metallo-dependent hydrolases superfamily. Adenosine and AMP deaminases family. Adenosine deaminase subfamily. The cofactor is Zn(2+).

It carries out the reaction adenosine + H2O + H(+) = inosine + NH4(+). The catalysed reaction is 2'-deoxyadenosine + H2O + H(+) = 2'-deoxyinosine + NH4(+). In terms of biological role, catalyzes the hydrolytic deamination of adenosine and 2-deoxyadenosine. The polypeptide is Adenosine deaminase (Clostridium botulinum (strain Loch Maree / Type A3)).